A 98-amino-acid chain; its full sequence is NADH-ubiquinone oxidoreductase chain 4L (98 aa).

3 helical membrane passes run 1 to 21 (MMSI…GVLI), 28 to 48 (STLL…ALLI), and 59 to 79 (APLI…ALLV).

It belongs to the complex I subunit 4L family. In terms of assembly, core subunit of respiratory chain NADH dehydrogenase (Complex I) which is composed of 45 different subunits.

The protein resides in the mitochondrion inner membrane. It catalyses the reaction a ubiquinone + NADH + 5 H(+)(in) = a ubiquinol + NAD(+) + 4 H(+)(out). Its function is as follows. Core subunit of the mitochondrial membrane respiratory chain NADH dehydrogenase (Complex I) which catalyzes electron transfer from NADH through the respiratory chain, using ubiquinone as an electron acceptor. Part of the enzyme membrane arm which is embedded in the lipid bilayer and involved in proton translocation. In Lagorchestes hirsutus (Rufous hare-wallaby), this protein is NADH-ubiquinone oxidoreductase chain 4L (MT-ND4L).